Reading from the N-terminus, the 188-residue chain is Threonylcarbamoyl-AMP synthase (188 aa).

The YrdC-like domain maps to 3-188 (QLSSTQVTPV…RSGLVLRNGQ (186 aa)).

Belongs to the SUA5 family. TsaC subfamily.

Its subcellular location is the cytoplasm. It catalyses the reaction L-threonine + hydrogencarbonate + ATP = L-threonylcarbamoyladenylate + diphosphate + H2O. Its function is as follows. Required for the formation of a threonylcarbamoyl group on adenosine at position 37 (t(6)A37) in tRNAs that read codons beginning with adenine. Catalyzes the conversion of L-threonine, HCO(3)(-)/CO(2) and ATP to give threonylcarbamoyl-AMP (TC-AMP) as the acyladenylate intermediate, with the release of diphosphate. The chain is Threonylcarbamoyl-AMP synthase from Shewanella denitrificans (strain OS217 / ATCC BAA-1090 / DSM 15013).